The sequence spans 159 residues: ATP synthase subunit b 2 (159 aa).

Residues 1-21 (MDATFWAFIALVIFVVIVVYM) form a helical membrane-spanning segment.

The protein belongs to the ATPase B chain family. As to quaternary structure, F-type ATPases have 2 components, F(1) - the catalytic core - and F(0) - the membrane proton channel. F(1) has five subunits: alpha(3), beta(3), gamma(1), delta(1), epsilon(1). F(0) has three main subunits: a(1), b(2) and c(10-14). The alpha and beta chains form an alternating ring which encloses part of the gamma chain. F(1) is attached to F(0) by a central stalk formed by the gamma and epsilon chains, while a peripheral stalk is formed by the delta and b chains.

It is found in the cell inner membrane. In terms of biological role, f(1)F(0) ATP synthase produces ATP from ADP in the presence of a proton or sodium gradient. F-type ATPases consist of two structural domains, F(1) containing the extramembraneous catalytic core and F(0) containing the membrane proton channel, linked together by a central stalk and a peripheral stalk. During catalysis, ATP synthesis in the catalytic domain of F(1) is coupled via a rotary mechanism of the central stalk subunits to proton translocation. Functionally, component of the F(0) channel, it forms part of the peripheral stalk, linking F(1) to F(0). In Brucella canis (strain ATCC 23365 / NCTC 10854 / RM-666), this protein is ATP synthase subunit b 2.